Here is a 209-residue protein sequence, read N- to C-terminus: 3-demethoxyubiquinol 3-hydroxylase (209 aa).

Residues Pro23–Pro36 are compositionally biased toward low complexity. Positions Pro23–Ser42 are disordered. Glu58, Glu88, His91, Glu140, Glu172, and His175 together coordinate Fe cation.

This sequence belongs to the COQ7 family. Fe cation serves as cofactor.

Its subcellular location is the cell membrane. The catalysed reaction is a 5-methoxy-2-methyl-3-(all-trans-polyprenyl)benzene-1,4-diol + AH2 + O2 = a 3-demethylubiquinol + A + H2O. It participates in cofactor biosynthesis; ubiquinone biosynthesis. Functionally, catalyzes the hydroxylation of 2-nonaprenyl-3-methyl-6-methoxy-1,4-benzoquinol during ubiquinone biosynthesis. This Variovorax paradoxus (strain S110) protein is 3-demethoxyubiquinol 3-hydroxylase.